The primary structure comprises 305 residues: HTH-type transcriptional activator BauR (305 aa).

An HTH lysR-type domain is found at 15–72; that stretch reads FDIRLLRIFKTIVECGSFSAAESTLGLSRSAISLHMGDLEKRLGMRLCQRGRAGFALT.

Belongs to the LysR transcriptional regulatory family.

Its function is as follows. Involved in the degradation of beta-alanine. BauR activates the transcription of the bauABCD operon. The protein is HTH-type transcriptional activator BauR (bauR) of Pseudomonas aeruginosa (strain ATCC 15692 / DSM 22644 / CIP 104116 / JCM 14847 / LMG 12228 / 1C / PRS 101 / PAO1).